A 183-amino-acid polypeptide reads, in one-letter code: MTGNIVARRYARALFALGAKSGVGELDKLGSDLAALAGALDAAPELGRIFRNPIITAGEKRNVILKLVEKYGVSATVRNFCLLLADKGRLDCLSDIQAFYGVLLDAEKGVIRGELMTAVELAEAKRAQVKAALEQQAGRKLELTFSVNKDILGGVVLKVGDRVLDASLRAQLGILKDNIKRGE.

The protein belongs to the ATPase delta chain family. As to quaternary structure, F-type ATPases have 2 components, F(1) - the catalytic core - and F(0) - the membrane proton channel. F(1) has five subunits: alpha(3), beta(3), gamma(1), delta(1), epsilon(1). F(0) has three main subunits: a(1), b(2) and c(10-14). The alpha and beta chains form an alternating ring which encloses part of the gamma chain. F(1) is attached to F(0) by a central stalk formed by the gamma and epsilon chains, while a peripheral stalk is formed by the delta and b chains.

It is found in the cell inner membrane. Its function is as follows. F(1)F(0) ATP synthase produces ATP from ADP in the presence of a proton or sodium gradient. F-type ATPases consist of two structural domains, F(1) containing the extramembraneous catalytic core and F(0) containing the membrane proton channel, linked together by a central stalk and a peripheral stalk. During catalysis, ATP synthesis in the catalytic domain of F(1) is coupled via a rotary mechanism of the central stalk subunits to proton translocation. This protein is part of the stalk that links CF(0) to CF(1). It either transmits conformational changes from CF(0) to CF(1) or is implicated in proton conduction. In Nitratidesulfovibrio vulgaris (strain DSM 19637 / Miyazaki F) (Desulfovibrio vulgaris), this protein is ATP synthase subunit delta.